A 304-amino-acid polypeptide reads, in one-letter code: RNA polymerase II holoenzyme cyclin-like subunit (304 aa).

Positions 43–174 (TIHDSKANKQ…LIEELQSYLI (132 aa)) constitute a Cyclin N-terminal domain.

The protein belongs to the cyclin family. Cyclin C subfamily. In terms of assembly, component of the SRB8-11 complex, a regulatory module of the Mediator complex.

It localises to the nucleus. In terms of biological role, component of the SRB8-11 complex. The SRB8-11 complex is a regulatory module of the Mediator complex which is itself involved in regulation of basal and activated RNA polymerase II-dependent transcription. The SRB8-11 complex may be involved in the transcriptional repression of a subset of genes regulated by Mediator. It may inhibit the association of the Mediator complex with RNA polymerase II to form the holoenzyme complex. The SRB8-11 complex phosphorylates the C-terminal domain (CTD) of the largest subunit of RNA polymerase II. The protein is RNA polymerase II holoenzyme cyclin-like subunit (SSN8) of Kluyveromyces lactis (strain ATCC 8585 / CBS 2359 / DSM 70799 / NBRC 1267 / NRRL Y-1140 / WM37) (Yeast).